Consider the following 454-residue polypeptide: F-box/WD repeat-containing protein 2 (454 aa).

The region spanning 54-101 (RDFLKLLPLELSFYLLKWLDPQTLLTCCLVSKQWNKVISACTEVWQTA) is the F-box domain. WD repeat units follow at residues 146–183 (GHSA…CVYG), 185–221 (QTHT…RTQH), 224–265 (GHTG…NTLT), and 276–314 (LQQC…NCKC). Position 298 is an N6-acetyllysine (Lys-298).

As to quaternary structure, directly interacts with SKP1 and CUL1.

Its function is as follows. Substrate-recognition component of the SCF (SKP1-CUL1-F-box protein)-type E3 ubiquitin ligase complex. The protein is F-box/WD repeat-containing protein 2 of Rattus norvegicus (Rat).